The following is a 312-amino-acid chain: Elongation factor Ts (312 aa).

The interval 80–83 (TDFV) is involved in Mg(2+) ion dislocation from EF-Tu.

The protein belongs to the EF-Ts family.

The protein resides in the cytoplasm. In terms of biological role, associates with the EF-Tu.GDP complex and induces the exchange of GDP to GTP. It remains bound to the aminoacyl-tRNA.EF-Tu.GTP complex up to the GTP hydrolysis stage on the ribosome. In Maricaulis maris (strain MCS10) (Caulobacter maris), this protein is Elongation factor Ts.